Here is a 624-residue protein sequence, read N- to C-terminus: Bifunctional protein ArgH (624 aa).

The argininosuccinate lyase stretch occupies residues 1–466 (MALWGGRFTQ…AARDTTLVKV (466 aa)). The N-acetyltransferase domain maps to 464 to 614 (VKVRPARITD…DEVALEFNLS (151 aa)). The probable acetyltransferase stretch occupies residues 467-624 (RPARITDIET…EQIISQVKVA (158 aa)).

It in the N-terminal section; belongs to the lyase 1 family. Argininosuccinate lyase subfamily.

It localises to the cytoplasm. The catalysed reaction is 2-(N(omega)-L-arginino)succinate = fumarate + L-arginine. It functions in the pathway amino-acid biosynthesis; L-arginine biosynthesis; L-arginine from L-ornithine and carbamoyl phosphate: step 3/3. This is Bifunctional protein ArgH (argH) from Vibrio vulnificus (strain CMCP6).